An 875-amino-acid polypeptide reads, in one-letter code: Protein translocase subunit SecA (875 aa).

ATP is bound by residues Q87, 105–109 (GEGKT), and D512. The Zn(2+) site is built by C860, C862, C871, and H872.

Belongs to the SecA family. In terms of assembly, monomer and homodimer. Part of the essential Sec protein translocation apparatus which comprises SecA, SecYEG and auxiliary proteins SecDF-YajC and YidC. Requires Zn(2+) as cofactor.

The protein resides in the cell inner membrane. It is found in the cytoplasm. It catalyses the reaction ATP + H2O + cellular proteinSide 1 = ADP + phosphate + cellular proteinSide 2.. In terms of biological role, part of the Sec protein translocase complex. Interacts with the SecYEG preprotein conducting channel. Has a central role in coupling the hydrolysis of ATP to the transfer of proteins into and across the cell membrane, serving both as a receptor for the preprotein-SecB complex and as an ATP-driven molecular motor driving the stepwise translocation of polypeptide chains across the membrane. The polypeptide is Protein translocase subunit SecA (Buchnera aphidicola subsp. Acyrthosiphon pisum (strain 5A)).